The chain runs to 208 residues: Probable nicotinate-nucleotide adenylyltransferase (208 aa).

Belongs to the NadD family.

The enzyme catalyses nicotinate beta-D-ribonucleotide + ATP + H(+) = deamido-NAD(+) + diphosphate. Its pathway is cofactor biosynthesis; NAD(+) biosynthesis; deamido-NAD(+) from nicotinate D-ribonucleotide: step 1/1. Functionally, catalyzes the reversible adenylation of nicotinate mononucleotide (NaMN) to nicotinic acid adenine dinucleotide (NaAD). This is Probable nicotinate-nucleotide adenylyltransferase from Nostoc sp. (strain PCC 7120 / SAG 25.82 / UTEX 2576).